A 191-amino-acid polypeptide reads, in one-letter code: Cathelicidin-related peptide Oh-Cath (191 aa).

A signal peptide spans 1–22 (MEGFFWKTLLVVGALAIGGTSS). A propeptide spanning residues 23 to 161 (LPHKPLTYEE…DQPRRVKRFK (139 aa)) is cleaved from the precursor. 2 cysteine pairs are disulfide-bonded: C81–C92 and C103–C120. The segment covering 125-151 (EEEEQKQEEGNEEEKEVEKEEKEEDEK) has biased composition (acidic residues). The segment at 125 to 154 (EEEEQKQEEGNEEEKEVEKEEKEEDEKDQP) is disordered.

It belongs to the cathelicidin family. Expressed by the venom gland.

Its subcellular location is the secreted. It is found in the target cell membrane. Its function is as follows. Potent antimicrobial peptide against Gram-negative (MIC=0.25 ug/ml against E.coli ATCC 25922, MIC=0.5 ug/ml against P.aeruginosa) and Gram-positive bacteria (MIC=64 ug/ml against E.faecalis, MIC=64 ug/ml against S.aureus). Adopts an amphipathic alpha helical conformation, that may allow to partition into the target membrane. Low hemolytic activities have been observed on mammalian cells. This chain is Cathelicidin-related peptide Oh-Cath, found in Ophiophagus hannah (King cobra).